Here is a 471-residue protein sequence, read N- to C-terminus: Probable ribonuclease FAU-1 (471 aa).

The S1 motif domain occupies 93-139 (GAVFDAAVDHTVGGGAILDLGDDREAYLPFGAVDDHVTDGDTLRVAI).

It belongs to the FAU-1 family.

In terms of biological role, probable RNase involved in rRNA stability through maturation and/or degradation of precursor rRNAs. Binds to RNA in loop regions with AU-rich sequences. In Halobacterium salinarum (strain ATCC 29341 / DSM 671 / R1), this protein is Probable ribonuclease FAU-1.